The primary structure comprises 246 residues: tRNA (guanine-N(7)-)-methyltransferase (246 aa).

E77, E102, D129, and D152 together coordinate S-adenosyl-L-methionine. D152 is a catalytic residue. Substrate-binding positions include K156, D188, and T225–E228.

The protein belongs to the class I-like SAM-binding methyltransferase superfamily. TrmB family.

The enzyme catalyses guanosine(46) in tRNA + S-adenosyl-L-methionine = N(7)-methylguanosine(46) in tRNA + S-adenosyl-L-homocysteine. The protein operates within tRNA modification; N(7)-methylguanine-tRNA biosynthesis. Its function is as follows. Catalyzes the formation of N(7)-methylguanine at position 46 (m7G46) in tRNA. The protein is tRNA (guanine-N(7)-)-methyltransferase of Haemophilus influenzae (strain PittGG).